We begin with the raw amino-acid sequence, 223 residues long: Neurotrophic factor BDNF precursor form (223 aa).

Positions 1 to 5 are cleaved as a signal peptide; the sequence is SCMKA. Residues 6-114 constitute a propeptide that is removed on maturation; it reads APMKEVSLRG…AANMSMRVRR (109 aa). Asn107 is a glycosylation site (N-linked (GlcNAc...) asparagine). 2 disulfide bridges follow: Cys127-Cys194 and Cys172-Cys223.

Belongs to the NGF-beta family.

The protein resides in the secreted. Promotes the survival of neuronal populations that are all located either in the central nervous system or directly connected to it. The protein is Neurotrophic factor BDNF precursor form (BDNF) of Ramphotyphlops sp. (strain YPM 13663) (Blind snake).